We begin with the raw amino-acid sequence, 260 residues long: UPF0246 protein Bxeno_A1262 (260 aa).

It belongs to the UPF0246 family.

The protein is UPF0246 protein Bxeno_A1262 of Paraburkholderia xenovorans (strain LB400).